Consider the following 257-residue polypeptide: Phosphate import ATP-binding protein PstB (257 aa).

The region spanning 4 to 252 (LKLNDVNIYY…PDNKETEDYI (249 aa)) is the ABC transporter domain. Residue 36–43 (GPSGCGKS) participates in ATP binding.

The protein belongs to the ABC transporter superfamily. Phosphate importer (TC 3.A.1.7) family. As to quaternary structure, the complex is composed of two ATP-binding proteins (PstB), two transmembrane proteins (PstC and PstA) and a solute-binding protein (PstS).

It localises to the cell membrane. It catalyses the reaction phosphate(out) + ATP + H2O = ADP + 2 phosphate(in) + H(+). Its function is as follows. Part of the ABC transporter complex PstSACB involved in phosphate import. Responsible for energy coupling to the transport system. This is Phosphate import ATP-binding protein PstB from Corynebacterium efficiens (strain DSM 44549 / YS-314 / AJ 12310 / JCM 11189 / NBRC 100395).